A 211-amino-acid chain; its full sequence is Uracil phosphoribosyltransferase (211 aa).

5-phospho-alpha-D-ribose 1-diphosphate-binding positions include arginine 78, arginine 103, and 130-138 (DPMLATGGT). Uracil is bound by residues isoleucine 196 and 201-203 (GDA). Aspartate 202 lines the 5-phospho-alpha-D-ribose 1-diphosphate pocket.

Belongs to the UPRTase family. The cofactor is Mg(2+).

It catalyses the reaction UMP + diphosphate = 5-phospho-alpha-D-ribose 1-diphosphate + uracil. It functions in the pathway pyrimidine metabolism; UMP biosynthesis via salvage pathway; UMP from uracil: step 1/1. Allosterically activated by GTP. In terms of biological role, catalyzes the conversion of uracil and 5-phospho-alpha-D-ribose 1-diphosphate (PRPP) to UMP and diphosphate. The protein is Uracil phosphoribosyltransferase of Kineococcus radiotolerans (strain ATCC BAA-149 / DSM 14245 / SRS30216).